We begin with the raw amino-acid sequence, 234 residues long: Thioredoxin-dependent peroxide reductase, mitochondrial (234 aa).

The N-terminal 30 residues, methionine 1–leucine 30, are a transit peptide targeting the mitochondrion. The 159-residue stretch at valine 40–phenylalanine 198 folds into the Thioredoxin domain. Cysteine 85 functions as the Cysteine sulfenic acid (-SOH) intermediate in the catalytic mechanism.

This sequence belongs to the peroxiredoxin family. AhpC/Prx1 subfamily. Homodimer; disulfide-linked, upon oxidation. 6 homodimers assemble to form a ring-like dodecamer. Also exists as a monomer, however the monomeric form is present at a much lower level than the homodimeric form. In terms of tissue distribution, expressed in thoracic flight muscles (at protein level). Detected in the head and body (at protein level).

Its subcellular location is the mitochondrion. The catalysed reaction is a hydroperoxide + [thioredoxin]-dithiol = an alcohol + [thioredoxin]-disulfide + H2O. Thiol-specific peroxidase that catalyzes the reduction of hydrogen peroxide and organic hydroperoxides to water and alcohols, respectively. Plays a role in cell protection against oxidative stress by detoxifying peroxides. May be involved in aging-associated changes in the responsiveness to oxidative stress. Involved in the maintenance of global thiol redox homeostasis. Functions in the central nervous system (CNS) and in motor neurons and is essential for normal motor function. The polypeptide is Thioredoxin-dependent peroxide reductase, mitochondrial (Drosophila melanogaster (Fruit fly)).